Reading from the N-terminus, the 220-residue chain is Fructose-6-phosphate aldolase 1 (220 aa).

K85 serves as the catalytic Schiff-base intermediate with substrate.

Belongs to the transaldolase family. Type 3A subfamily. Homodecamer.

The protein localises to the cytoplasm. It catalyses the reaction beta-D-fructose 6-phosphate = dihydroxyacetone + D-glyceraldehyde 3-phosphate. Functionally, catalyzes the reversible formation of fructose 6-phosphate from dihydroxyacetone and D-glyceraldehyde 3-phosphate via an aldolization reaction. The chain is Fructose-6-phosphate aldolase 1 (fsaA) from Escherichia coli O6:H1 (strain CFT073 / ATCC 700928 / UPEC).